The following is a 169-amino-acid chain: Cytochrome c-type biogenesis protein CcmE (169 aa).

At 1–7 (MTRKQRR) the chain is on the cytoplasmic side. Residues 8 to 28 (MTIIGGSLAVLALAAALVLNA) traverse the membrane as a helical; Signal-anchor for type II membrane protein segment. Over 29–169 (LRDSIVFFST…AQGNPQGAVR (141 aa)) the chain is Periplasmic. Residues histidine 122 and tyrosine 126 each coordinate heme. The interval 143 to 169 (DDYGGKASDGVKPAATTAQGNPQGAVR) is disordered. The segment covering 158–169 (TTAQGNPQGAVR) has biased composition (polar residues).

It belongs to the CcmE/CycJ family.

The protein localises to the cell inner membrane. Functionally, heme chaperone required for the biogenesis of c-type cytochromes. Transiently binds heme delivered by CcmC and transfers the heme to apo-cytochromes in a process facilitated by CcmF and CcmH. The chain is Cytochrome c-type biogenesis protein CcmE from Bradyrhizobium diazoefficiens (strain JCM 10833 / BCRC 13528 / IAM 13628 / NBRC 14792 / USDA 110).